A 103-amino-acid chain; its full sequence is Large ribosomal subunit protein uL24 (103 aa).

Belongs to the universal ribosomal protein uL24 family. Part of the 50S ribosomal subunit.

Its function is as follows. One of two assembly initiator proteins, it binds directly to the 5'-end of the 23S rRNA, where it nucleates assembly of the 50S subunit. One of the proteins that surrounds the polypeptide exit tunnel on the outside of the subunit. The polypeptide is Large ribosomal subunit protein uL24 (Lacticaseibacillus casei (strain BL23) (Lactobacillus casei)).